The primary structure comprises 192 residues: Adenylate kinase (192 aa).

10 to 18 is a binding site for ATP; sequence GVPGVGGTT.

The protein belongs to the archaeal adenylate kinase family. As to quaternary structure, monomer.

Its subcellular location is the cytoplasm. It catalyses the reaction AMP + ATP = 2 ADP. This is Adenylate kinase from Methanococcus maripaludis (strain C6 / ATCC BAA-1332).